Reading from the N-terminus, the 568-residue chain is Natural resistance-associated macrophage protein 2 (568 aa).

Positions 1–40 are disordered; sequence MVLGPEQKMSDDSVSGDHGESASLGNINPAYSNPSLSQSP. The Cytoplasmic segment spans residues 1–69; it reads MVLGPEQKMS…EEYSCFSFRK (69 aa). Residues 8-20 are compositionally biased toward basic and acidic residues; sequence KMSDDSVSGDHGE. The segment covering 23-40 has biased composition (polar residues); that stretch reads SLGNINPAYSNPSLSQSP. A helical membrane pass occupies residues 70–90; it reads LWAFTGPGFLMSIAYLDPGNI. Residues 91-96 are Extracellular-facing; that stretch reads ESDLQS. Residues 97–117 form a helical membrane-spanning segment; it reads GAVAGFKLLWILLLATLVGLL. Topologically, residues 118–154 are cytoplasmic; sequence LQRLAARLGVVTGLHLAEVCHRQYPKVPRVILWLMVE. Residues 155 to 175 form a helical membrane-spanning segment; the sequence is LAIIGSDMQEVIGSAIAINLL. Topologically, residues 176–179 are extracellular; sequence SVGR. Residues 180–200 form a helical membrane-spanning segment; it reads IPLWGGVLITIADTFVFLFLD. Residues 201–208 lie on the Cytoplasmic side of the membrane; sequence KYGLRKLE. The helical transmembrane segment at 209–229 threads the bilayer; it reads AFFGFLITIMALTFGYEYVTV. The Extracellular portion of the chain corresponds to 230–255; sequence KPSQSQVLKGMFVPSCSGCRTPQIEQ. Residues 256 to 276 form a helical membrane-spanning segment; sequence AVGIVGAVIMPHNMYLHSALV. The Cytoplasmic portion of the chain corresponds to 277–301; the sequence is KSRQVNRNNKQEVREANKYFFIESC. A helical membrane pass occupies residues 302–322; sequence IALFVSFIINVFVVSVFAEAF. Topologically, residues 323–360 are extracellular; sequence FGKTNEQVVEVCTNTSSPHAGLFPKDNSTLAVDIYKGG. N-linked (GlcNAc...) asparagine glycosylation is found at Asn336 and Asn349. A helical transmembrane segment spans residues 361–381; the sequence is VVLGCYFGPAALYIWAVGILA. The Cytoplasmic segment spans residues 382–408; the sequence is AGQSSTMTGTYSGQFVMEGFLNLKWSR. A helical membrane pass occupies residues 409 to 429; sequence FARVVLTRSIAIIPTLLVAVF. The Extracellular portion of the chain corresponds to 430-440; the sequence is QDVEHLTGMND. A helical transmembrane segment spans residues 441 to 461; it reads FLNVLQSLQLPFALIPILTFT. Topologically, residues 462–482 are cytoplasmic; the sequence is SLRPVMSDFANGLGWRIAGGI. The helical transmembrane segment at 483 to 503 threads the bilayer; the sequence is LVLIICSINMYFVVVYVRDLG. The Extracellular segment spans residues 504–506; it reads HVA. A helical transmembrane segment spans residues 507–527; sequence LYVVAAVVSVAYLGFVFYLGW. At 528-568 the chain is on the cytoplasmic side; the sequence is QCLIALGMSFLDCGHTCHLGLTAQPELYLLNTMDADSLVSR. The segment at 555–559 is required for early endosome targeting; that stretch reads YLLNT. 2 positions are modified to phosphoserine: Ser564 and Ser567.

Belongs to the NRAMP family. In terms of assembly, forms a complex with NDFIP1 and NEDD4L, in cortical neurons, in response to iron and cobalt exposure; this interaction leads to SLC11A2 ubiquitination by NEDD4L and proteasome-dependent degradation. Interacts with NDFIP1, NDFIP2 and WWP2; this interaction leads to SLC11A2 ubiquitination by WWP2 and subsequent proteasome-dependent degradation. Interacts with COX2 and TOM6 at the outer mitochondrion membrane. Interacts with ARRDC1; this interaction regulates the incorporation of SLC11A2 into extracellular vesicles through an ubiquitination-dependent mechanism. Interacts with ARRDC4; controls the incorporation of SLC11A2 into extracellular vesicles through an ubiquitination-dependent mechanism. Post-translationally, ubiquitinated by WWP2. N-glycosylated. In terms of tissue distribution, ubiquitously expressed. Expressed in erythroid progenitors.

It localises to the early endosome membrane. The protein resides in the apical cell membrane. It is found in the late endosome membrane. The protein localises to the lysosome membrane. Its subcellular location is the cell membrane. It localises to the extracellular vesicle membrane. The protein resides in the mitochondrion outer membrane. It is found in the golgi apparatus. The protein localises to the trans-Golgi network membrane. Its subcellular location is the recycling endosome membrane. The enzyme catalyses Fe(2+)(in) + H(+)(in) = Fe(2+)(out) + H(+)(out). The catalysed reaction is Co(2+)(out) + H(+)(out) = Co(2+)(in) + H(+)(in). It catalyses the reaction Cd(2+)(out) + H(+)(out) = Cd(2+)(in) + H(+)(in). It carries out the reaction Mn(2+)(in) + H(+)(in) = Mn(2+)(out) + H(+)(out). The enzyme catalyses Zn(2+)(out) + H(+)(out) = Zn(2+)(in) + H(+)(in). The catalysed reaction is Ni(2+)(out) + H(+)(out) = Ni(2+)(in) + H(+)(in). It catalyses the reaction H(+)(in) = H(+)(out). It carries out the reaction Fe(2+)(in) = Fe(2+)(out). Proton-coupled metal ion symporter operating with a proton to metal ion stoichiometry of 1:1. Selectively transports various divalent metal cations, in decreasing affinity: Cd(2+) &gt; Fe(2+) &gt; Co(2+), Mn(2+) &gt;&gt; Zn(2+), Ni(2+), VO(2+). Essential for maintenance of iron homeostasis by modulating intestinal absorption of dietary Fe(2+) and TF-associated endosomal Fe(2+) transport in erythroid precursors and other cells. Enables Fe(2+) and Mn(2+) ion entry into mitochondria, and is thus expected to promote mitochondrial heme synthesis, iron-sulfur cluster biogenesis and antioxidant defense. Can mediate uncoupled fluxes of either protons or metal ions. The chain is Natural resistance-associated macrophage protein 2 (SLC11A2) from Homo sapiens (Human).